We begin with the raw amino-acid sequence, 416 residues long: D-amino acid dehydrogenase (416 aa).

3-17 (VTILGAGVIGVTTAY) contacts FAD.

It belongs to the DadA oxidoreductase family. The cofactor is FAD.

The enzyme catalyses a D-alpha-amino acid + A + H2O = a 2-oxocarboxylate + AH2 + NH4(+). It participates in amino-acid degradation; D-alanine degradation; NH(3) and pyruvate from D-alanine: step 1/1. Its function is as follows. Oxidative deamination of D-amino acids. This chain is D-amino acid dehydrogenase, found in Rhizobium rhizogenes (strain K84 / ATCC BAA-868) (Agrobacterium radiobacter).